Reading from the N-terminus, the 931-residue chain is Phosphoenolpyruvate carboxylase (931 aa).

Catalysis depends on residues His138 and Lys594.

Belongs to the PEPCase type 1 family. It depends on Mg(2+) as a cofactor.

It catalyses the reaction oxaloacetate + phosphate = phosphoenolpyruvate + hydrogencarbonate. Forms oxaloacetate, a four-carbon dicarboxylic acid source for the tricarboxylic acid cycle. This Streptococcus agalactiae serotype III (strain NEM316) protein is Phosphoenolpyruvate carboxylase.